A 218-amino-acid polypeptide reads, in one-letter code: Small ribosomal subunit protein uS3 (218 aa).

The 69-residue stretch at 38 to 106 (IRDYVAKRLS…RVHINIVEIK (69 aa)) folds into the KH type-2 domain.

It belongs to the universal ribosomal protein uS3 family. As to quaternary structure, part of the 30S ribosomal subunit. Forms a tight complex with proteins S10 and S14.

Its function is as follows. Binds the lower part of the 30S subunit head. Binds mRNA in the 70S ribosome, positioning it for translation. The sequence is that of Small ribosomal subunit protein uS3 from Listeria monocytogenes serotype 4b (strain F2365).